The following is a 414-amino-acid chain: MGQTLSEPVTEKHSVNGSNEFVLYGLSSMQGWRISMEDAHSAILSMECSAVKDPVDFFAVYDGHGGDKVAKWCGSNLPQILEKNPDFQKGDFVNALKSSFLNADKAILDDDQFHTDPSGCTATVVLRVGNKLYCANAGDSRTVLGSKGIAKPLSADHKPSNEAEKARICAAGGFVDFGRVNGNLALSRAIGDFEFKNSNLEPEKQIVTALPDVVVHEITDDDEFVVLACDGIWDCKTSQQVIEFVRRGIVAGTSLEKIAENLMDNCIASDTETTGLGCDNMTVCIVALLQENDKSAWYKKIADRVAANDGPCAPPEYAENHGPGWRSGDNNKKVIVPPNFHQVKLNGSDGYDKDANENSKEDDSTNGSLAAGFRWKEHFFPHKAEEENSSSETDIVNSNKDVADDHKEAVSAAD.

Residues L23–L288 form the PPM-type phosphatase domain. D62, G63, D230, and D279 together coordinate Mn(2+). Disordered stretches follow at residues A313–S368 and F380–D414. The span at G350–D363 shows a compositional bias: basic and acidic residues. Residues S390–K400 are compositionally biased toward polar residues. Residues D401–D414 show a composition bias toward basic and acidic residues.

Belongs to the PP2C family. As to quaternary structure, monomer. Mg(2+) serves as cofactor. It depends on Mn(2+) as a cofactor.

The protein resides in the cytoplasm. It is found in the nucleus. It carries out the reaction O-phospho-L-seryl-[protein] + H2O = L-seryl-[protein] + phosphate. The catalysed reaction is O-phospho-L-threonyl-[protein] + H2O = L-threonyl-[protein] + phosphate. Dephosphorylating regulator for many key proteins. Has an important role in osmotic stability and cell shape control. It may negatively regulate the osmosensing signal transmitted through wis1 map kinase. The chain is Protein phosphatase 2C homolog 3 (ptc3) from Schizosaccharomyces pombe (strain 972 / ATCC 24843) (Fission yeast).